Reading from the N-terminus, the 97-residue chain is Defensin-like protein 301 (97 aa).

A signal peptide spans 1-24 (MEKVTSIFFVLLLISSCLILRSQG). 6 cysteine pairs are disulfide-bonded: cysteine 28-cysteine 47, cysteine 34-cysteine 53, cysteine 39-cysteine 55, cysteine 65-cysteine 84, cysteine 71-cysteine 92, and cysteine 76-cysteine 94.

This sequence belongs to the DEFL family.

The protein resides in the secreted. The chain is Defensin-like protein 301 from Arabidopsis thaliana (Mouse-ear cress).